A 342-amino-acid chain; its full sequence is Dof zinc finger protein DOF4.6 (342 aa).

Residues 21 to 54 are disordered; that stretch reads NTCPKPQPQPLQPQQPPSVGGERKARPEKDQAVN. Positions 25–36 are enriched in pro residues; the sequence is KPQPQPLQPQQP. A compositionally biased stretch (basic and acidic residues) spans 41 to 51; the sequence is GERKARPEKDQ. The segment at 53–107 adopts a Dof-type zinc-finger fold; sequence VNCPRCNSTNTKFCYYNNYSLTQPRYFCKGCRRYWTEGGSLRNIPVGGGSRKNKR. C55, C58, C80, and C83 together coordinate Zn(2+). The disordered stretch occupies residues 94-136; it reads RNIPVGGGSRKNKRSHSSSSDISNNHSDSTQPATKKHLSDHHH. The segment covering 110 to 122 has biased composition (low complexity); that stretch reads SSSSDISNNHSDS. The span at 127–136 shows a compositional bias: basic residues; it reads TKKHLSDHHH.

As to expression, accumulates in the stele.

The protein resides in the nucleus. Transcription factor that binds specifically to a 5'-AA[AG]G-3' consensus core sequence. This is Dof zinc finger protein DOF4.6 from Arabidopsis thaliana (Mouse-ear cress).